The primary structure comprises 213 residues: MSDKNEVSSLYPPPPPFIQFFTEENSKLFRECGKDEEKLAKCTTKQREQLKYFVKPELPRDGSYRAFGNVWKIKDELPELSQMGIEQLYRKRESVTELENGTTTEVEPSPQDSQSGTNYENKIQESKKLMKSLLLNFLELIGILGVDSSRYEKKLDEIRVIAINIHHLLNEYRPHQSRESLIMLFEEQLEHKRKEMEHINKVCDEVESKLAQL.

Positions 96 to 120 (TELENGTTTEVEPSPQDSQSGTNYE) are disordered. Residues 97–120 (ELENGTTTEVEPSPQDSQSGTNYE) show a composition bias toward polar residues.

The protein belongs to the Mediator complex subunit 7 family. Component of the Mediator complex.

It is found in the nucleus. In terms of biological role, component of the Mediator complex, a coactivator involved in the regulated transcription of nearly all RNA polymerase II-dependent genes. Mediator functions as a bridge to convey information from gene-specific regulatory proteins to the basal RNA polymerase II transcription machinery. Mediator is recruited to promoters by direct interactions with regulatory proteins and serves as a scaffold for the assembly of a functional preinitiation complex with RNA polymerase II and the general transcription factors. The sequence is that of Mediator of RNA polymerase II transcription subunit 7 (MED7) from Kluyveromyces lactis (strain ATCC 8585 / CBS 2359 / DSM 70799 / NBRC 1267 / NRRL Y-1140 / WM37) (Yeast).